The chain runs to 408 residues: NADH-quinone oxidoreductase subunit D (408 aa).

It belongs to the complex I 49 kDa subunit family. As to quaternary structure, NDH-1 is composed of 14 different subunits. Subunits NuoB, C, D, E, F, and G constitute the peripheral sector of the complex.

The protein resides in the cell inner membrane. The enzyme catalyses a quinone + NADH + 5 H(+)(in) = a quinol + NAD(+) + 4 H(+)(out). Its function is as follows. NDH-1 shuttles electrons from NADH, via FMN and iron-sulfur (Fe-S) centers, to quinones in the respiratory chain. The immediate electron acceptor for the enzyme in this species is believed to be ubiquinone. Couples the redox reaction to proton translocation (for every two electrons transferred, four hydrogen ions are translocated across the cytoplasmic membrane), and thus conserves the redox energy in a proton gradient. The sequence is that of NADH-quinone oxidoreductase subunit D from Campylobacter hominis (strain ATCC BAA-381 / DSM 21671 / CCUG 45161 / LMG 19568 / NCTC 13146 / CH001A).